We begin with the raw amino-acid sequence, 631 residues long: Fatty acid ABC transporter ATP-binding/permease protein (631 aa).

Residues 1–11 show a composition bias toward low complexity; sequence MTAPPGARPRA. Positions 1–20 are disordered; the sequence is MTAPPGARPRAASPPPNMRS. A run of 3 helical transmembrane segments spans residues 42-62, 123-143, and 205-225; these read IAVITLGIAGTTIGVIVPRIL, LALALALYLAAALMIWAQARL, and ILTMVAVLAMMVSISGLLALI. Residues 42–365 form the ABC transmembrane type-1 domain; sequence IAVITLGIAG…LAGMYNALQS (324 aa). One can recognise an ABC transporter domain in the interval 397-631; sequence VEFEHVNFAY…RGVYYQMTRA (235 aa). Position 430 to 437 (430 to 437) interacts with ATP; that stretch reads GPTGAGKT.

Belongs to the ABC transporter superfamily. Lipid exporter (TC 3.A.1.106) family.

It localises to the cell inner membrane. Its function is as follows. ABC transporter involved in fatty acid import. Transmembrane domains (TMD) form a pore in the membrane and the ATP-binding domain (NBD) is responsible for energy generation. In Mycobacterium bovis (strain ATCC BAA-935 / AF2122/97), this protein is Fatty acid ABC transporter ATP-binding/permease protein.